Here is a 344-residue protein sequence, read N- to C-terminus: S-methyl-5'-thioadenosine phosphorylase (344 aa).

Phosphate-binding positions include threonine 51, 99–100, and 132–133; these read RH and SA. Methionine 234 is a substrate binding site. Residue serine 235 participates in phosphate binding. Residue 258–260 participates in substrate binding; the sequence is DYD.

Belongs to the PNP/MTAP phosphorylase family. MTAP subfamily. As to quaternary structure, homotrimer.

The protein resides in the cytoplasm. Its subcellular location is the nucleus. The catalysed reaction is S-methyl-5'-thioadenosine + phosphate = 5-(methylsulfanyl)-alpha-D-ribose 1-phosphate + adenine. It participates in amino-acid biosynthesis; L-methionine biosynthesis via salvage pathway; S-methyl-5-thio-alpha-D-ribose 1-phosphate from S-methyl-5'-thioadenosine (phosphorylase route): step 1/1. Its function is as follows. Catalyzes the reversible phosphorylation of S-methyl-5'-thioadenosine (MTA) to adenine and 5-methylthioribose-1-phosphate. Involved in the breakdown of MTA, a major by-product of polyamine biosynthesis. Responsible for the first step in the methionine salvage pathway after MTA has been generated from S-adenosylmethionine. Has broad substrate specificity with 6-aminopurine nucleosides as preferred substrates. In Phaeosphaeria nodorum (strain SN15 / ATCC MYA-4574 / FGSC 10173) (Glume blotch fungus), this protein is S-methyl-5'-thioadenosine phosphorylase.